A 312-amino-acid chain; its full sequence is Adenylyl-sulfate kinase, chloroplastic (312 aa).

Residue 142-149 (GLSGSGKS) coordinates ATP. Catalysis depends on S216, which acts as the Phosphoserine intermediate.

It belongs to the APS kinase family.

The protein localises to the plastid. Its subcellular location is the chloroplast. It catalyses the reaction adenosine 5'-phosphosulfate + ATP = 3'-phosphoadenylyl sulfate + ADP + H(+). The protein operates within sulfur metabolism; hydrogen sulfide biosynthesis; sulfite from sulfate: step 2/3. Functionally, catalyzes the synthesis of activated sulfate. The polypeptide is Adenylyl-sulfate kinase, chloroplastic (AKN) (Catharanthus roseus (Madagascar periwinkle)).